We begin with the raw amino-acid sequence, 381 residues long: RxLR effector protein 54 (381 aa).

The N-terminal stretch at 1–19 (MRFQSIMMLTITCAGTCLA) is a signal peptide. The short motif at 57–75 (RFLRFDTVARDTAGNDEER) is the RxLR-dEER element. WY-domain regions lie at residues 97 to 150 (SAEE…ANNG), 151 to 198 (NQAF…SLSG), 199 to 247 (NWIR…WNKN), 251 to 299 (FFGD…LLTS), and 302 to 354 (SHKT…RDKI). The ATG8 interacting motif signature appears at 372-381 (KPLDFDWEIV).

The protein belongs to the RxLR effector family. Interacts via its C-terminal AIM with host ATG8CL.

The protein localises to the secreted. Its subcellular location is the host nucleus. It localises to the host cytoplasm. Effector that specifically binds host autophagy protein ATG8CL of the ATG8 family to stimulate autophagosome formation and subsequent autophagy rather than blocking autophagic flux. The pathogen remodels host-microbe interface by co-opting the host autophagy machinery which plays a key role in plant immunity. PexRD54 competes with the autophagy cargo receptor Joka2 to deplete it out of ATG8CL complexes and interferes with Joka2's positive effect on pathogen defense. The polypeptide is RxLR effector protein 54 (Phytophthora infestans (strain T30-4) (Potato late blight agent)).